The primary structure comprises 355 residues: Cyanide hydratase (355 aa).

Positions 6 to 286 (YKAAAVTSEP…GLLFVDIDLN (281 aa)) constitute a CN hydrolase domain. The active-site Proton acceptor is the E46. Residue K128 is part of the active site. Residue C163 is the Nucleophile of the active site.

Belongs to the carbon-nitrogen hydrolase superfamily. Nitrilase family. Oligomer of dimers, forming left-handed helical fibers.

The catalysed reaction is formamide = hydrogen cyanide + H2O. Functionally, catalyzes the hydration of cyanide to formamide. Degradation of cyanide may be important for plant pathogenic fungi in infection of cyanogenic plants. Also has low but significant nitrilase activity with acetonitrile, propionitrile and benzonitrile. The chain is Cyanide hydratase from Gibberella baccata (Fusarium lateritium).